Here is a 235-residue protein sequence, read N- to C-terminus: Acyl-protein thioesterase 1 (235 aa).

Active-site charge relay system residues include serine 125, aspartate 181, and histidine 213.

Belongs to the AB hydrolase superfamily. AB hydrolase 2 family.

The protein localises to the cytoplasm. It localises to the nucleus. It catalyses the reaction S-hexadecanoyl-L-cysteinyl-[protein] + H2O = L-cysteinyl-[protein] + hexadecanoate + H(+). Functionally, hydrolyzes fatty acids from S-acylated cysteine residues in proteins with a strong preference for palmitoylated G-alpha proteins over other acyl substrates. Mediates the deacylation of G-alpha proteins such as GPA1 in vivo, but has weak or no activity toward palmitoylated Ras proteins. Has weak lysophospholipase activity in vitro; however such activity may not exist in vivo. In Gibberella zeae (strain ATCC MYA-4620 / CBS 123657 / FGSC 9075 / NRRL 31084 / PH-1) (Wheat head blight fungus), this protein is Acyl-protein thioesterase 1.